A 585-amino-acid chain; its full sequence is Glutamate decarboxylase 2 (585 aa).

Residues 1 to 14 show a composition bias toward low complexity; sequence MASPGSGFWSFGSE. Residues 1 to 24 form a disordered region; that stretch reads MASPGSGFWSFGSEDGSGDSENPG. S3, S6, S10, and S13 each carry phosphoserine. 2 S-palmitoyl cysteine lipidation sites follow: C30 and C45. 181–183 is a substrate binding site; sequence QLS. K396 is subject to N6-(pyridoxal phosphate)lysine. R558 lines the substrate pocket.

This sequence belongs to the group II decarboxylase family. As to quaternary structure, homodimer. Requires pyridoxal 5'-phosphate as cofactor. In terms of processing, phosphorylated; which does not affect kinetic parameters or subcellular location. Palmitoylated; which is required for presynaptic clustering.

The protein localises to the cytoplasm. It localises to the cytosol. The protein resides in the cytoplasmic vesicle. Its subcellular location is the presynaptic cell membrane. It is found in the golgi apparatus membrane. It catalyses the reaction L-glutamate + H(+) = 4-aminobutanoate + CO2. Its function is as follows. Catalyzes the production of GABA. The chain is Glutamate decarboxylase 2 from Homo sapiens (Human).